Here is a 292-residue protein sequence, read N- to C-terminus: 4-hydroxy-tetrahydrodipicolinate synthase (292 aa).

Position 45 (T45) interacts with pyruvate. The active-site Proton donor/acceptor is the Y133. The active-site Schiff-base intermediate with substrate is K161. I203 provides a ligand contact to pyruvate.

This sequence belongs to the DapA family. In terms of assembly, homodimer.

It localises to the cytoplasm. The enzyme catalyses L-aspartate 4-semialdehyde + pyruvate = (2S,4S)-4-hydroxy-2,3,4,5-tetrahydrodipicolinate + H2O + H(+). It participates in amino-acid biosynthesis; L-lysine biosynthesis via DAP pathway; (S)-tetrahydrodipicolinate from L-aspartate: step 3/4. In terms of biological role, catalyzes the condensation of (S)-aspartate-beta-semialdehyde [(S)-ASA] and pyruvate to 4-hydroxy-tetrahydrodipicolinate (HTPA). The chain is 4-hydroxy-tetrahydrodipicolinate synthase from Pseudomonas savastanoi pv. phaseolicola (strain 1448A / Race 6) (Pseudomonas syringae pv. phaseolicola (strain 1448A / Race 6)).